The sequence spans 1251 residues: Insulin receptor substrate 1 (1251 aa).

Position 3 is a phosphoserine (serine 3). The mediates interaction with PHIP stretch occupies residues 3–137 (SPPESDGFSD…GAGGGGGSCS (135 aa)). Positions 12–115 (DVRKVGYLRK…WYQALLQLHN (104 aa)) constitute a PH domain. Phosphoserine; by CK2 is present on serine 99. Residues 160 to 264 (FKEVWQVILK…EAMRAMSDEF (105 aa)) form the IRS-type PTB domain. Positions 262–430 (DEFRPRSKSQ…SDGGFISSDE (169 aa)) are disordered. Residues 269-281 (KSQSSSNCSNPIS) show a composition bias toward low complexity. A Phosphoserine modification is found at serine 270. A Phosphoserine; by RPS6KB1 modification is found at serine 307. Serine 312 is modified (phosphoserine; by IKKB, MAPK8 and RPS6KB1). 4 positions are modified to phosphoserine: serine 323, serine 330, serine 345, and serine 348. Basic residues predominate over residues 354–363 (THAHRHRGSA). Composition is skewed to low complexity over residues 383 to 404 (SPSATSPVSLSSSSTSGHGSTS) and 412 to 424 (SSASVSGSPSDGG). Phosphoserine is present on serine 419. Phosphothreonine occurs at positions 446 and 453. At tyrosine 465 the chain carries Phosphotyrosine; by INSR. The YXXM motif 1 signature appears at 465–468 (YICM). Residues 494–513 (YTPGTGLGTSPALAGDEASS) are disordered. The residue at position 527 (serine 527) is a Phosphoserine; by RPS6KB1. The YXXM motif 2 signature appears at 551–554 (YTEM). The span at 594–610 (RRGGHHRPDSSTLHTDD) shows a compositional bias: basic and acidic residues. The interval 594-616 (RRGGHHRPDSSTLHTDDGYMPMS) is disordered. Tyrosine 612 bears the Phosphotyrosine; by INSR mark. The short motif at 612 to 615 (YMPM) is the YXXM motif 3 element. Serine 629 carries the post-translational modification Phosphoserine. Tyrosine 632 is modified (phosphotyrosine; by INSR). The short motif at 632–635 (YMPM) is the YXXM motif 4 element. Position 636 is a phosphoserine; by RPS6KB1 (serine 636). Tyrosine 662 is modified (phosphotyrosine). Positions 662–665 (YMMM) match the YXXM motif 5 motif. Residues 668–692 (SGGCSPDIGGGPSSSSSSTVPSGSS) are disordered. Positions 730–733 (YMNM) match the YXXM motif 6 motif. Disordered regions lie at residues 734 to 753 (SPVGDSNTSSPSDCYYGPED) and 769 to 946 (FKHT…EETG). The span at 774–783 (RPGEPEEGAR) shows a compositional bias: basic and acidic residues. The residue at position 792 (serine 792) is a Phosphoserine; by AMPK and SIK2. Low complexity-rich tracts occupy residues 799–813 (AATADDSSSSTSSDS) and 875–891 (QQQQQQQQQQQQQQQQQ). Residue serine 901 is modified to Phosphoserine. Tyrosine 905 is modified (phosphotyrosine; by INSR). The interval 905-907 (YVN) is GRB2-binding. Over residues 924–937 (SRSSPSVRCPSQLQ) the composition is skewed to polar residues. 2 positions are modified to phosphotyrosine; by INSR: tyrosine 950 and tyrosine 998. Short sequence motifs (YXXM motif) lie at residues 950–953 (YMKM), 998–1001 (YMTM), and 1021–1024 (YADM). Disordered stretches follow at residues 1091–1124 (NQSAKVIRADPQGCRRRHSSETFSSTPSATRVGN) and 1130–1149 (AGAAIGGSGGSSSSSEDVKR). Phosphoserine occurs at positions 1109 and 1110. Positions 1111–1123 (ETFSSTPSATRVG) are enriched in polar residues. At tyrosine 1188 the chain carries Phosphotyrosine; by INSR. Residue lysine 1195 forms a Glycyl lysine isopeptide (Lys-Gly) (interchain with G-Cter in ubiquitin) linkage. A disordered region spans residues 1195–1251 (KDFKQRPQECTPQPQPPPPPPPHQPLGSSESSSTRRSSEDLSAYASISFQKQPEDLQ). Pro residues predominate over residues 1207-1218 (QPQPPPPPPPHQ). The residue at position 1238 (tyrosine 1238) is a Phosphotyrosine; by INSR.

In terms of assembly, interacts with UBTF and PIK3CA. Interacts (via phosphorylated YXXM motifs) with PIK3R1. Interacts with ROCK1 and FER. Interacts (via PH domain) with PHIP. Interacts with GRB2. Interacts with SOCS7. Interacts (via IRS-type PTB domain) with IGF1R and INSR (via the tyrosine-phosphorylated NPXY motif). Interacts with ALK. Interacts with EIF2AK2/PKR. Interacts with GKAP1. Interacts with DGKZ in the absence of insulin; insulin stimulation decreases this interaction. Found in a ternary complex with DGKZ and PIP5K1A in the absence of insulin stimulation. Interacts with SQSTM1; the interaction is disrupted by the presence of tensin TNS2. Interacts with NCK1 (via SH2 domain). Interacts with NCK2 (via SH3 domain). Interacts with SH2B1; this interaction enhances leptin-induced activation of the PI3-kinase pathway. Interacts with DVL2; this interaction promotes the Wnt/beta-catenin signaling pathway. Interacts with JAK1. Post-translationally, serine phosphorylation of IRS1 is a mechanism for insulin resistance. Ser-312 phosphorylation inhibits insulin action through disruption of IRS1 interaction with the insulin receptor. Phosphorylation of Tyr-905 is required for GRB2-binding. Phosphorylated by ALK. Phosphorylated at Ser-270, Ser-307, Ser-636 and Ser-1109 by RPS6KB1; phosphorylation induces accelerated degradation of IRS1. Phosphorylated on tyrosine residues in response to insulin. In skeletal muscles, dephosphorylated on Tyr-612 by TNS2 under anabolic conditions; dephosphorylation results in the proteasomal degradation of IRS1. Ubiquitinated by the Cul7-RING(FBXW8) complex in a mTOR-dependent manner, leading to its degradation: the Cul7-RING(FBXW8) complex recognizes and binds IRS1 previously phosphorylated by S6 kinase (RPS6KB1 or RPS6KB2). Ubiquitinated by TRAF4 through 'Lys-29' linkage; this ubiquitination regulates the interaction of IRS1 with IGFR and IRS1 tyrosine phosphorylation upon IGF1 stimulation. In terms of processing, S-nitrosylation at by BLVRB inhibits its activity.

The protein localises to the cytoplasm. It is found in the nucleus. Signaling adapter protein that participates in the signal transduction from two prominent receptor tyrosine kinases, insulin receptor/INSR and insulin-like growth factor I receptor/IGF1R. Plays therefore an important role in development, growth, glucose homeostasis as well as lipid metabolism. Upon phosphorylation by the insulin receptor, functions as a signaling scaffold that propagates insulin action through binding to SH2 domain-containing proteins including the p85 regulatory subunit of PI3K, NCK1, NCK2, GRB2 or SHP2. Recruitment of GRB2 leads to the activation of the guanine nucleotide exchange factor SOS1 which in turn triggers the Ras/Raf/MEK/MAPK signaling cascade. Activation of the PI3K/AKT pathway is responsible for most of insulin metabolic effects in the cell, and the Ras/Raf/MEK/MAPK is involved in the regulation of gene expression and in cooperation with the PI3K pathway regulates cell growth and differentiation. Acts a positive regulator of the Wnt/beta-catenin signaling pathway through suppression of DVL2 autophagy-mediated degradation leading to cell proliferation. In Chlorocebus aethiops (Green monkey), this protein is Insulin receptor substrate 1 (IRS1).